Reading from the N-terminus, the 902-residue chain is Inter-alpha-trypsin inhibitor heavy chain H1 (902 aa).

The signal sequence occupies residues 1 to 28; sequence MDGTMGLQGLLCLCLASHLALQAMPTQG. Positions 29–158 constitute a VIT domain; that stretch reads SPTDSTKGNK…KATFQLTYEE (130 aa). S-linked (Hex...) cysteine glycosylation occurs at Cys-52. An N-linked (GlcNAc...) asparagine glycan is attached at Asn-69. Residue Ser-121 is modified to Phosphoserine. Asn-277 carries an N-linked (GlcNAc...) asparagine glycan. Residues 282–442 enclose the VWFA domain; sequence NKNVVFVIDI…WNFLEVRALE (161 aa). Thr-394 and Thr-399 each carry phosphothreonine. Positions 637-651 are enriched in polar residues; the sequence is SASQPSPTHPSSSIQ. The interval 637–656 is disordered; the sequence is SASQPSPTHPSSSIQKLPDR. Ser-639 is a glycosylation site (O-linked (GalNAc...) serine). An O-linked (GalNAc...) threonine glycan is attached at Thr-644. The residue at position 663 (Asp-663) is an Aspartate 1-(chondroitin 4-sulfate)-ester. The propeptide occupies 664–902; that stretch reads PHFIIRVPQK…HTDYIVPDIF (239 aa). Asn-741 carries an N-linked (GlcNAc...) asparagine glycan.

It belongs to the ITIH family. As to quaternary structure, I-alpha-I plasma protease inhibitors are assembled from one or two heavy chains (HC) and one light chain, bikunin. Inter-alpha-inhibitor (I-alpha-I) is composed of ITIH1/HC1, ITIH2/HC2 and bikunin. Interacts with TNFAIP6 (via Link and CUB domains). Heavy chains are linked to bikunin via chondroitin 4-sulfate esterified to the alpha-carboxyl of the C-terminal aspartate after propeptide cleavage. Post-translationally, the S-linked glycan is composed of two 6-carbon sugars, possibly Glc or Gal.

The protein resides in the secreted. Its function is as follows. May act as a carrier of hyaluronan in serum or as a binding protein between hyaluronan and other matrix protein, including those on cell surfaces in tissues to regulate the localization, synthesis and degradation of hyaluronan which are essential to cells undergoing biological processes. The polypeptide is Inter-alpha-trypsin inhibitor heavy chain H1 (ITIH1) (Sus scrofa (Pig)).